The primary structure comprises 394 residues: D-mannose isomerase (394 aa).

Residues H251 and H380 each act as proton donor/acceptor in the active site.

This sequence belongs to the N-acylglucosamine 2-epimerase family. As to quaternary structure, monomer.

The enzyme catalyses D-mannose = D-fructose. The catalysed reaction is D-lyxose = D-xylulose. Its function is as follows. Catalyzes the reversible isomerization of D-mannose to D-fructose. Can also isomerize D-lyxose, with lower efficiency. In longer reaction with a higher concentration of enzyme, it can isomerize 4-OH D-mannose derivatives (D-talose and 4-O-monosaccharyl-D-mannose). Cannot use D-glucose. In Marinomonas mediterranea (strain ATCC 700492 / JCM 21426 / NBRC 103028 / MMB-1), this protein is D-mannose isomerase.